The following is an 862-amino-acid chain: Protein translocase subunit SecA (862 aa).

ATP-binding positions include Gln88, 106-110, and Asp506; that span reads GEGKT. Zn(2+) contacts are provided by Cys839, Cys841, Cys850, and His851.

The protein belongs to the SecA family. As to quaternary structure, monomer and homodimer. Part of the essential Sec protein translocation apparatus which comprises SecA, SecYEG and auxiliary proteins SecDF-YajC and YidC. Zn(2+) serves as cofactor.

Its subcellular location is the cell inner membrane. It localises to the cytoplasm. It carries out the reaction ATP + H2O + cellular proteinSide 1 = ADP + phosphate + cellular proteinSide 2.. Functionally, part of the Sec protein translocase complex. Interacts with the SecYEG preprotein conducting channel. Has a central role in coupling the hydrolysis of ATP to the transfer of proteins into and across the cell membrane, serving as an ATP-driven molecular motor driving the stepwise translocation of polypeptide chains across the membrane. This is Protein translocase subunit SecA from Campylobacter jejuni (strain RM1221).